Consider the following 261-residue polypeptide: Na(+)-translocating NADH-quinone reductase subunit C (261 aa).

A helical transmembrane segment spans residues 12-32 (LGVVIGLSLVCSIIVSTAAVG). Thr-229 is modified (FMN phosphoryl threonine).

It belongs to the NqrC family. As to quaternary structure, composed of six subunits; NqrA, NqrB, NqrC, NqrD, NqrE and NqrF. Requires FMN as cofactor.

It localises to the cell inner membrane. It carries out the reaction a ubiquinone + n Na(+)(in) + NADH + H(+) = a ubiquinol + n Na(+)(out) + NAD(+). Functionally, NQR complex catalyzes the reduction of ubiquinone-1 to ubiquinol by two successive reactions, coupled with the transport of Na(+) ions from the cytoplasm to the periplasm. NqrA to NqrE are probably involved in the second step, the conversion of ubisemiquinone to ubiquinol. The sequence is that of Na(+)-translocating NADH-quinone reductase subunit C from Vibrio parahaemolyticus serotype O3:K6 (strain RIMD 2210633).